The following is a 955-amino-acid chain: Kinesin-like protein K39 (955 aa).

A Kinesin motor domain is found at 12-392; the sequence is RVKVSVRVRP…LRYASRARDI (381 aa). 122–129 lines the ATP pocket; sequence GQTGSGKT. Residues 426–955 adopt a coiled-coil conformation; sequence PAYVSELKKK…EERAAELASQ (530 aa). Disordered stretches follow at residues 682–712 and 725–955; these read ELDA…RESE and TAAA…LASQ. 7 tandem repeats follow at residues 704-742, 743-781, 782-820, 821-859, 860-898, 899-937, and 938-955. The 7 X 39 AA approximate tandem repeats stretch occupies residues 704–955; that stretch reads LEQQLRESEE…EERAAELASQ (252 aa). Composition is skewed to basic and acidic residues over residues 785 to 794, 824 to 833, 863 to 872, 902 to 911, and 941 to 955; these read QLRDSEERAA, QLRESEERAA, and QLRD…LASQ.

It belongs to the TRAFAC class myosin-kinesin ATPase superfamily. Kinesin family.

The protein resides in the cytoplasm. The protein localises to the cytoskeleton. This is Kinesin-like protein K39 (KIN) from Leishmania chagasi.